The chain runs to 414 residues: Mannan endo-1,4-beta-mannosidase 2 (414 aa).

The N-terminal stretch at 1-25 (MAYFQRLISCIFVLFLLSLAFACEA) is a signal peptide. Residues Trp95 and Asn210 each contribute to the substrate site. Glu211 (proton donor) is an active-site residue. Tyr288 provides a ligand contact to substrate. Glu328 functions as the Nucleophile in the catalytic mechanism. Residue Trp370 coordinates substrate.

This sequence belongs to the glycosyl hydrolase 5 (cellulase A) family.

It localises to the secreted. It catalyses the reaction Random hydrolysis of (1-&gt;4)-beta-D-mannosidic linkages in mannans, galactomannans and glucomannans.. In terms of biological role, possesses endo-beta-mannanase activity in vitro. May be involved in seed germination by weakening the endosperm cap prior to radicle emergence. The polypeptide is Mannan endo-1,4-beta-mannosidase 2 (MAN2) (Solanum lycopersicum (Tomato)).